Consider the following 123-residue polypeptide: MIRGLGIDVVELDRIEAALIRFGDRFLARILTPAERAALPPIPLTRTAGLFAAKEAAAKALGTGFAQGVAFHTLEILSDAAGRPALTLHGPALARAEALGATSWHVSISHSRDTAAAVVVLEG.

Asp8 and Glu55 together coordinate Mg(2+).

The protein belongs to the P-Pant transferase superfamily. AcpS family. Mg(2+) is required as a cofactor.

Its subcellular location is the cytoplasm. The enzyme catalyses apo-[ACP] + CoA = holo-[ACP] + adenosine 3',5'-bisphosphate + H(+). In terms of biological role, transfers the 4'-phosphopantetheine moiety from coenzyme A to a Ser of acyl-carrier-protein. The protein is Holo-[acyl-carrier-protein] synthase of Solidesulfovibrio magneticus (strain ATCC 700980 / DSM 13731 / RS-1) (Desulfovibrio magneticus).